The primary structure comprises 315 residues: Thioredoxin reductase (315 aa).

FAD is bound at residue 34 to 41 (EGMKVGGQ). Cysteine 134 and cysteine 137 are oxidised to a cystine. 282–291 (DIRVKSLRQV) contributes to the FAD binding site.

The protein belongs to the class-II pyridine nucleotide-disulfide oxidoreductase family. In terms of assembly, homodimer. FAD is required as a cofactor.

Its subcellular location is the cytoplasm. The enzyme catalyses [thioredoxin]-dithiol + NADP(+) = [thioredoxin]-disulfide + NADPH + H(+). The chain is Thioredoxin reductase (trxB) from Peptoclostridium litorale (Clostridium litorale).